A 176-amino-acid polypeptide reads, in one-letter code: ATP-dependent protease subunit HslV (176 aa).

Residue Thr2 is part of the active site. The Na(+) site is built by Gly157, Cys160, and Thr163.

It belongs to the peptidase T1B family. HslV subfamily. A double ring-shaped homohexamer of HslV is capped on each side by a ring-shaped HslU homohexamer. The assembly of the HslU/HslV complex is dependent on binding of ATP.

It is found in the cytoplasm. It catalyses the reaction ATP-dependent cleavage of peptide bonds with broad specificity.. Its activity is regulated as follows. Allosterically activated by HslU binding. Protease subunit of a proteasome-like degradation complex believed to be a general protein degrading machinery. The polypeptide is ATP-dependent protease subunit HslV (Pseudomonas savastanoi pv. phaseolicola (strain 1448A / Race 6) (Pseudomonas syringae pv. phaseolicola (strain 1448A / Race 6))).